The sequence spans 132 residues: Small ribosomal subunit protein uS8 (132 aa).

Belongs to the universal ribosomal protein uS8 family. In terms of assembly, part of the 30S ribosomal subunit. Contacts proteins S5 and S12.

Its function is as follows. One of the primary rRNA binding proteins, it binds directly to 16S rRNA central domain where it helps coordinate assembly of the platform of the 30S subunit. The chain is Small ribosomal subunit protein uS8 from Bacillus licheniformis (strain ATCC 14580 / DSM 13 / JCM 2505 / CCUG 7422 / NBRC 12200 / NCIMB 9375 / NCTC 10341 / NRRL NRS-1264 / Gibson 46).